The following is a 508-amino-acid chain: Flagellin (508 aa).

Belongs to the bacterial flagellin family.

The protein resides in the secreted. Its subcellular location is the bacterial flagellum. Functionally, flagellin is the subunit protein which polymerizes to form the filaments of bacterial flagella. The protein is Flagellin (fliC) of Salmonella berta.